Consider the following 510-residue polypeptide: NAD(P)H-quinone oxidoreductase subunit 2, chloroplastic (510 aa).

The next 13 helical transmembrane spans lie at 26–46 (LFDGSFIFPECILIFGLILLL), 57–77 (IPWLYFISSTSLVMSIMALLF), 99–119 (IFQVLILLCSTLCIPLSVEYI), 124–144 (MAITEFLLFVLTATLGGMFLC), 149–169 (LITIFVAPECFSFCSYLLSGY), 184–204 (LLMGGASSSILVHGFSWLYGL), 227–247 (PGISIALIFITVGIGFKLSPA), 295–315 (WHLLLEILALLSMILGNLIAI), 323–343 (MLAYSSIGQIGYIIIGIIVGD), 354–374 (YMLFYISMNLGTFACIILFGL), 395–415 (ALSLALCLLSLGGLPPLAGFF), 418–438 (LYLFWCGWQAGLYFLVLIALV), and 484–504 (MIVCVIASTIPGISMNPIIAI).

Belongs to the complex I subunit 2 family. NDH is composed of at least 16 different subunits, 5 of which are encoded in the nucleus.

Its subcellular location is the plastid. It is found in the chloroplast thylakoid membrane. It catalyses the reaction a plastoquinone + NADH + (n+1) H(+)(in) = a plastoquinol + NAD(+) + n H(+)(out). The catalysed reaction is a plastoquinone + NADPH + (n+1) H(+)(in) = a plastoquinol + NADP(+) + n H(+)(out). In terms of biological role, NDH shuttles electrons from NAD(P)H:plastoquinone, via FMN and iron-sulfur (Fe-S) centers, to quinones in the photosynthetic chain and possibly in a chloroplast respiratory chain. The immediate electron acceptor for the enzyme in this species is believed to be plastoquinone. Couples the redox reaction to proton translocation, and thus conserves the redox energy in a proton gradient. The chain is NAD(P)H-quinone oxidoreductase subunit 2, chloroplastic from Trachelium caeruleum (Blue throatwort).